A 569-amino-acid polypeptide reads, in one-letter code: Adenine deaminase 1 (569 aa).

It belongs to the metallo-dependent hydrolases superfamily. Adenine deaminase family. Mn(2+) is required as a cofactor.

It catalyses the reaction adenine + H2O + H(+) = hypoxanthine + NH4(+). The chain is Adenine deaminase 1 from Rhizobium johnstonii (strain DSM 114642 / LMG 32736 / 3841) (Rhizobium leguminosarum bv. viciae).